Reading from the N-terminus, the 1465-residue chain is Ankyrin and armadillo repeat-containing protein (1465 aa).

A helical transmembrane segment spans residues Met313–Leu329. 5 ANK repeats span residues Ala532–Gln561, Asn582–Leu611, Arg615–Glu644, Asn651–Lys680, and Lys684–Val714. ARM repeat units lie at residues Asp745–Thr784, Val786–Lys825, Glu827–Met865, Glu868–Arg907, Lys910–Asn949, and Pro1085–Leu1125. The disordered stretch occupies residues Lys1431 to Gln1465.

It is found in the membrane. The sequence is that of Ankyrin and armadillo repeat-containing protein (Ankar) from Mus musculus (Mouse).